Reading from the N-terminus, the 341-residue chain is Anthranilate phosphoribosyltransferase (341 aa).

Residues Gly79, 82 to 83, Thr87, 89 to 92, 107 to 115, and Ser119 contribute to the 5-phospho-alpha-D-ribose 1-diphosphate site; these read GD, NIST, and KHGNRAVSS. Gly79 serves as a coordination point for anthranilate. Ser91 is a binding site for Mg(2+). Residue Asn110 participates in anthranilate binding. Arg165 is an anthranilate binding site. Residues Asp224 and Glu225 each contribute to the Mg(2+) site.

It belongs to the anthranilate phosphoribosyltransferase family. As to quaternary structure, homodimer. Mg(2+) serves as cofactor.

It carries out the reaction N-(5-phospho-beta-D-ribosyl)anthranilate + diphosphate = 5-phospho-alpha-D-ribose 1-diphosphate + anthranilate. It functions in the pathway amino-acid biosynthesis; L-tryptophan biosynthesis; L-tryptophan from chorismate: step 2/5. Catalyzes the transfer of the phosphoribosyl group of 5-phosphorylribose-1-pyrophosphate (PRPP) to anthranilate to yield N-(5'-phosphoribosyl)-anthranilate (PRA). This chain is Anthranilate phosphoribosyltransferase, found in Bacillus cereus (strain G9842).